Here is a 301-residue protein sequence, read N- to C-terminus: Mitochondrial carnitine/acylcarnitine carrier protein (301 aa).

Ala-2 bears the N-acetylalanine mark. Residues Ala-2 to Lys-12 are Cytoplasmic-facing. Solcar repeat units lie at residues Ile-8–Leu-99, Leu-108–Ile-196, and Leu-207–Phe-293. The chain crosses the membrane as a helical span at residues Asn-13–Leu-31. Over Asp-32 to Arg-73 the chain is Mitochondrial matrix. Residues Gly-74 to Phe-93 traverse the membrane as a helical segment. Over Gly-94–Gln-112 the chain is Cytoplasmic. A helical transmembrane segment spans residues Leu-113–Gly-131. Over Glu-132–Lys-170 the chain is Mitochondrial matrix. N6-acetyllysine is present on residues Lys-148 and Lys-157. Lys-170 is modified (N6-acetyllysine; alternate). Lys-170 is modified (N6-succinyllysine; alternate). A helical transmembrane segment spans residues Gly-171–Tyr-190. At Glu-191–Arg-211 the chain is on the cytoplasmic side. A helical membrane pass occupies residues Val-212 to Pro-230. Over Asp-231–Lys-267 the chain is Mitochondrial matrix. Residues Gly-268 to Phe-287 form a helical membrane-spanning segment. Over Glu-288–Leu-301 the chain is Cytoplasmic.

The protein belongs to the mitochondrial carrier (TC 2.A.29) family.

The protein localises to the mitochondrion inner membrane. It catalyses the reaction O-acetyl-(R)-carnitine(in) + (R)-carnitine(out) = O-acetyl-(R)-carnitine(out) + (R)-carnitine(in). The enzyme catalyses an O-acyl-(R)-carnitine(in) + (R)-carnitine(out) = an O-acyl-(R)-carnitine(out) + (R)-carnitine(in). It carries out the reaction O-propanoyl-(R)-carnitine(in) + (R)-carnitine(out) = O-propanoyl-(R)-carnitine(out) + (R)-carnitine(in). The catalysed reaction is O-hexadecanoyl-(R)-carnitine(in) + (R)-carnitine(out) = O-hexadecanoyl-(R)-carnitine(out) + (R)-carnitine(in). It catalyses the reaction O-octanoyl-(R)-carnitine(in) + (R)-carnitine(out) = O-octanoyl-(R)-carnitine(out) + (R)-carnitine(in). The enzyme catalyses (R)-carnitine(in) = (R)-carnitine(out). Functionally, mediates the electroneutral exchange of acylcarnitines (O-acyl-(R)-carnitine or L-acylcarnitine) of different acyl chain lengths (ranging from O-acetyl-(R)-carnitine to long-chain O-acyl-(R)-carnitines) with free carnitine ((R)-carnitine or L-carnitine) across the mitochondrial inner membrane, via a ping-pong mechanism. Key player in the mitochondrial oxidation pathway, it translocates the fatty acids in the form of acylcarnitines into the mitochondrial matrix, where the carnitine palmitoyltransferase 2 (CPT-2) activates them to undergo fatty acid beta-oxidation. Catalyzes the unidirectional transport (uniport) of carnitine at lower rates than the antiport (exchange). The sequence is that of Mitochondrial carnitine/acylcarnitine carrier protein (SLC25A20) from Macaca fascicularis (Crab-eating macaque).